The primary structure comprises 89 residues: Small ribosomal subunit protein uS15 (89 aa).

The protein belongs to the universal ribosomal protein uS15 family. In terms of assembly, part of the 30S ribosomal subunit. Forms a bridge to the 50S subunit in the 70S ribosome, contacting the 23S rRNA.

In terms of biological role, one of the primary rRNA binding proteins, it binds directly to 16S rRNA where it helps nucleate assembly of the platform of the 30S subunit by binding and bridging several RNA helices of the 16S rRNA. Functionally, forms an intersubunit bridge (bridge B4) with the 23S rRNA of the 50S subunit in the ribosome. This chain is Small ribosomal subunit protein uS15, found in Saccharopolyspora erythraea (strain ATCC 11635 / DSM 40517 / JCM 4748 / NBRC 13426 / NCIMB 8594 / NRRL 2338).